Here is an 80-residue protein sequence, read N- to C-terminus: MSQEAILEKVRSIVAEQLSVEASEIKPDSNFQNDLGADSLDTVELVMALEEAFDIEIPDEAAEGITTVGDAVKYIEDKQS.

The Carrier domain maps to glutamate 4–glutamine 79. Serine 39 is modified (O-(pantetheine 4'-phosphoryl)serine).

Belongs to the acyl carrier protein (ACP) family. Post-translationally, 4'-phosphopantetheine is transferred from CoA to a specific serine of apo-ACP by AcpS. This modification is essential for activity because fatty acids are bound in thioester linkage to the sulfhydryl of the prosthetic group.

It localises to the cytoplasm. It participates in lipid metabolism; fatty acid biosynthesis. Carrier of the growing fatty acid chain in fatty acid biosynthesis. The chain is Acyl carrier protein from Prochlorococcus marinus (strain SARG / CCMP1375 / SS120).